A 330-amino-acid chain; its full sequence is Delta-aminolevulinic acid dehydratase (330 aa).

Cysteine 122, cysteine 124, histidine 131, and cysteine 132 together coordinate Zn(2+). The Schiff-base intermediate with substrate role is filled by lysine 199. Lysine 199 bears the N6-succinyllysine mark. 5-aminolevulinate is bound at residue arginine 209. The residue at position 215 (serine 215) is a Phosphoserine. Arginine 221 is a 5-aminolevulinate binding site. Cysteine 223 lines the Zn(2+) pocket. Lysine 252 acts as the Schiff-base intermediate with substrate in catalysis. Lysine 252 bears the N6-succinyllysine mark. The 5-aminolevulinate site is built by serine 279 and tyrosine 318.

It belongs to the ALAD family. Homooctamer; active form. Homohexamer; low activity form. Zn(2+) serves as cofactor.

The protein localises to the cytoplasm. The protein resides in the cytosol. It catalyses the reaction 2 5-aminolevulinate = porphobilinogen + 2 H2O + H(+). Its pathway is porphyrin-containing compound metabolism; protoporphyrin-IX biosynthesis; coproporphyrinogen-III from 5-aminolevulinate: step 1/4. With respect to regulation, can alternate between a fully active homooctamer and a low-activity homohexamer. A bound magnesium ion may promote the assembly of the fully active homooctamer. The magnesium-binding site is absent in the low-activity homohexamer. Inhibited by compounds that favor the hexameric state. Inhibited by divalent lead ions. The lead ions partially displace the zinc cofactor. Functionally, catalyzes an early step in the biosynthesis of tetrapyrroles. Binds two molecules of 5-aminolevulinate per subunit, each at a distinct site, and catalyzes their condensation to form porphobilinogen. The chain is Delta-aminolevulinic acid dehydratase (Alad) from Rattus norvegicus (Rat).